We begin with the raw amino-acid sequence, 918 residues long: Calcium-transporting ATPase type 2C member 1 (918 aa).

Topologically, residues M1–Q78 are cytoplasmic. The chain crosses the membrane as a helical span at residues F79 to I95. The Extracellular segment spans residues L96–Q99. Residues F100–E121 traverse the membrane as a helical segment. Residues Y122 to D262 are Cytoplasmic-facing. The helical transmembrane segment at L263–V282 threads the bilayer. The Extracellular segment spans residues G283–F294. Residues T295–T316 form a helical membrane-spanning segment. Over L317–K699 the chain is Cytoplasmic. Catalysis depends on D349, which acts as the 4-aspartylphosphate intermediate. D643 and D647 together coordinate Mg(2+). Residues N700 to M722 form a helical membrane-spanning segment. At N723 to P727 the chain is on the extracellular side. Residues L728–E751 traverse the membrane as a helical segment. Topologically, residues P752–I775 are cytoplasmic. A helical membrane pass occupies residues L776–W794. The Extracellular portion of the chain corresponds to R795–V801. The helical transmembrane segment at I802 to S827 threads the bilayer. The Cytoplasmic segment spans residues Q828–M842. A helical transmembrane segment spans residues F843 to P862. The Extracellular portion of the chain corresponds to L863–L875. A helical membrane pass occupies residues D876–E892. The Cytoplasmic portion of the chain corresponds to I893–V918.

It belongs to the cation transport ATPase (P-type) (TC 3.A.3) family. Type IIA subfamily. As to quaternary structure, monomer. Homodimer. As to expression, expressed in hippocampal neurons in the CA3 region of the Amon's horn (at protein level). Expressed in brain, heart, lung, stomach, liver, colon and mammary gland.

The protein localises to the golgi apparatus. It is found in the trans-Golgi network membrane. It localises to the golgi stack membrane. It catalyses the reaction Ca(2+)(in) + ATP + H2O = Ca(2+)(out) + ADP + phosphate + H(+). The catalysed reaction is Mn(2+)(in) + ATP + H2O = Mn(2+)(out) + ADP + phosphate + H(+). In terms of biological role, ATP-driven pump that supplies the Golgi apparatus with Ca(2+) and Mn(2+) ions, both essential cofactors for processing and trafficking of newly synthesized proteins in the secretory pathway. Within a catalytic cycle, acquires Ca(2+) or Mn(2+) ions on the cytoplasmic side of the membrane and delivers them to the lumenal side. The transfer of ions across the membrane is coupled to ATP hydrolysis and is associated with a transient phosphorylation that shifts the pump conformation from inward-facing to outward-facing state. Plays a primary role in the maintenance of Ca(2+) homeostasis in the trans-Golgi compartment with a functional impact on Golgi and post-Golgi protein sorting as well as a structural impact on cisternae morphology. Responsible for loading the Golgi stores with Ca(2+) ions in keratinocytes, contributing to keratinocyte differentiation and epidermis integrity. Participates in Ca(2+) and Mn(2+) ions uptake into the Golgi store of hippocampal neurons and regulates protein trafficking required for neural polarity. May also play a role in the maintenance of Ca(2+) and Mn(2+) homeostasis and signaling in the cytosol while preventing cytotoxicity. This Mus musculus (Mouse) protein is Calcium-transporting ATPase type 2C member 1.